The chain runs to 103 residues: Large ribosomal subunit protein eL42 (103 aa).

Zn(2+)-binding residues include C18 and C21. The C4-type zinc finger occupies 18–81 (CPKCRTHTEH…TVLKLKCSKC (64 aa)). The disordered stretch occupies residues 40 to 62 (LSEGERRYARKKKGYGSKRKPEQ). The segment covering 47-57 (YARKKKGYGSK) has biased composition (basic residues). 2 residues coordinate Zn(2+): C78 and C81.

Belongs to the eukaryotic ribosomal protein eL42 family. Part of the 50S ribosomal subunit. Requires Zn(2+) as cofactor.

In terms of biological role, binds to the 23S rRNA. The protein is Large ribosomal subunit protein eL42 of Desulfurococcus amylolyticus (strain DSM 18924 / JCM 16383 / VKM B-2413 / 1221n) (Desulfurococcus kamchatkensis).